The sequence spans 531 residues: Chaperonin GroEL, chloroplastic (531 aa).

ATP contacts are provided by residues 30–33 (TLGP), 87–91 (DGTTT), Gly415, 481–483 (NAA), and Asp497.

Belongs to the chaperonin (HSP60) family. Forms a cylinder of 14 subunits composed of two heptameric rings stacked back-to-back. Interacts with the co-chaperonin GroES.

It is found in the plastid. The protein resides in the chloroplast. It carries out the reaction ATP + H2O + a folded polypeptide = ADP + phosphate + an unfolded polypeptide.. Its function is as follows. Together with its co-chaperonin GroES, plays an essential role in assisting protein folding. The GroEL-GroES system forms a nano-cage that allows encapsulation of the non-native substrate proteins and provides a physical environment optimized to promote and accelerate protein folding. This Emiliania huxleyi (Coccolithophore) protein is Chaperonin GroEL, chloroplastic.